Consider the following 509-residue polypeptide: Hyaluronidase PH-20 (509 aa).

Positions 1-35 (MGVLKFKHIFFRSFVKSSGVSQIVFTFLLIPCCLT) are cleaved as a signal peptide. 2 disulfide bridges follow: C60–C351 and C224–C238. N82 carries N-linked (GlcNAc...) asparagine glycosylation. The active-site Proton donor is E148. 4 N-linked (GlcNAc...) asparagine glycosylation sites follow: N166, N235, N254, and N368. 3 disulfide bridges follow: C376–C387, C381–C435, and C437–C464. N393 carries an N-linked (GlcNAc...) asparagine glycan. The GPI-anchor amidated serine moiety is linked to residue S490. Positions 491–509 (ATMFIVSILFLIISSVASL) are cleaved as a propeptide — removed in mature form.

This sequence belongs to the glycosyl hydrolase 56 family. In terms of processing, N-glycosylated. In terms of tissue distribution, testis.

It localises to the cell membrane. The enzyme catalyses Random hydrolysis of (1-&gt;4)-linkages between N-acetyl-beta-D-glucosamine and D-glucuronate residues in hyaluronate.. In terms of biological role, involved in sperm-egg adhesion. Upon fertilization sperm must first penetrate a layer of cumulus cells that surrounds the egg before reaching the zona pellucida. The cumulus cells are embedded in a matrix containing hyaluronic acid which is formed prior to ovulation. This protein aids in penetrating the layer of cumulus cells by digesting hyaluronic acid. The sequence is that of Hyaluronidase PH-20 (SPAM1) from Homo sapiens (Human).